We begin with the raw amino-acid sequence, 481 residues long: Aspartyl/glutamyl-tRNA(Asn/Gln) amidotransferase subunit B (481 aa).

It belongs to the GatB/GatE family. GatB subfamily. Heterotrimer of A, B and C subunits.

It carries out the reaction L-glutamyl-tRNA(Gln) + L-glutamine + ATP + H2O = L-glutaminyl-tRNA(Gln) + L-glutamate + ADP + phosphate + H(+). The enzyme catalyses L-aspartyl-tRNA(Asn) + L-glutamine + ATP + H2O = L-asparaginyl-tRNA(Asn) + L-glutamate + ADP + phosphate + 2 H(+). Its function is as follows. Allows the formation of correctly charged Asn-tRNA(Asn) or Gln-tRNA(Gln) through the transamidation of misacylated Asp-tRNA(Asn) or Glu-tRNA(Gln) in organisms which lack either or both of asparaginyl-tRNA or glutaminyl-tRNA synthetases. The reaction takes place in the presence of glutamine and ATP through an activated phospho-Asp-tRNA(Asn) or phospho-Glu-tRNA(Gln). The chain is Aspartyl/glutamyl-tRNA(Asn/Gln) amidotransferase subunit B from Marinomonas sp. (strain MWYL1).